A 327-amino-acid polypeptide reads, in one-letter code: Phenylalanine--tRNA ligase alpha subunit (327 aa).

Glu252 is a binding site for Mg(2+).

This sequence belongs to the class-II aminoacyl-tRNA synthetase family. Phe-tRNA synthetase alpha subunit type 1 subfamily. Tetramer of two alpha and two beta subunits. Requires Mg(2+) as cofactor.

The protein resides in the cytoplasm. It catalyses the reaction tRNA(Phe) + L-phenylalanine + ATP = L-phenylalanyl-tRNA(Phe) + AMP + diphosphate + H(+). The sequence is that of Phenylalanine--tRNA ligase alpha subunit from Proteus mirabilis (strain HI4320).